Consider the following 684-residue polypeptide: DNA-directed RNA polymerase subunit beta' (684 aa).

Zn(2+) contacts are provided by Cys-69, Cys-71, Cys-87, and Cys-90. Mg(2+) is bound by residues Asp-491, Asp-493, and Asp-495.

This sequence belongs to the RNA polymerase beta' chain family. RpoC1 subfamily. As to quaternary structure, in plastids the minimal PEP RNA polymerase catalytic core is composed of four subunits: alpha, beta, beta', and beta''. When a (nuclear-encoded) sigma factor is associated with the core the holoenzyme is formed, which can initiate transcription. Requires Mg(2+) as cofactor. Zn(2+) is required as a cofactor.

The protein localises to the plastid. It is found in the chloroplast. It catalyses the reaction RNA(n) + a ribonucleoside 5'-triphosphate = RNA(n+1) + diphosphate. DNA-dependent RNA polymerase catalyzes the transcription of DNA into RNA using the four ribonucleoside triphosphates as substrates. The protein is DNA-directed RNA polymerase subunit beta' of Phaseolus vulgaris (Kidney bean).